Here is a 235-residue protein sequence, read N- to C-terminus: Phosphate-specific transport system accessory protein PhoU homolog 2 (235 aa).

It belongs to the PhoU family. In terms of assembly, homodimer.

Its subcellular location is the cytoplasm. In terms of biological role, plays a role in the regulation of phosphate uptake. The sequence is that of Phosphate-specific transport system accessory protein PhoU homolog 2 (phoU2) from Thermotoga maritima (strain ATCC 43589 / DSM 3109 / JCM 10099 / NBRC 100826 / MSB8).